The sequence spans 400 residues: Enoyl-[acyl-carrier-protein] reductase [NADH] 2 (400 aa).

NAD(+) is bound by residues 48–53, 75–76, 112–113, and 141–142; these read GASSGF, FE, DA, and LA. A substrate-binding site is contributed by Tyr-228. The Proton donor role is filled by Tyr-238. NAD(+) contacts are provided by residues Lys-247 and 276 to 278; that span reads LVT.

It belongs to the TER reductase family. As to quaternary structure, monomer.

The catalysed reaction is a 2,3-saturated acyl-[ACP] + NAD(+) = a (2E)-enoyl-[ACP] + NADH + H(+). The protein operates within lipid metabolism; fatty acid biosynthesis. Its function is as follows. Involved in the final reduction of the elongation cycle of fatty acid synthesis (FAS II). Catalyzes the reduction of a carbon-carbon double bond in an enoyl moiety that is covalently linked to an acyl carrier protein (ACP). This is Enoyl-[acyl-carrier-protein] reductase [NADH] 2 from Vibrio vulnificus (strain CMCP6).